Here is a 385-residue protein sequence, read N- to C-terminus: Succinyl-diaminopimelate desuccinylase (385 aa).

A Zn(2+)-binding site is contributed by histidine 73. Residue aspartate 75 is part of the active site. Zn(2+) is bound at residue aspartate 106. Residue glutamate 141 is the Proton acceptor of the active site. Zn(2+)-binding residues include glutamate 142, glutamate 170, and histidine 359.

Belongs to the peptidase M20A family. DapE subfamily. As to quaternary structure, homodimer. Zn(2+) is required as a cofactor. The cofactor is Co(2+).

It carries out the reaction N-succinyl-(2S,6S)-2,6-diaminopimelate + H2O = (2S,6S)-2,6-diaminopimelate + succinate. It participates in amino-acid biosynthesis; L-lysine biosynthesis via DAP pathway; LL-2,6-diaminopimelate from (S)-tetrahydrodipicolinate (succinylase route): step 3/3. In terms of biological role, catalyzes the hydrolysis of N-succinyl-L,L-diaminopimelic acid (SDAP), forming succinate and LL-2,6-diaminopimelate (DAP), an intermediate involved in the bacterial biosynthesis of lysine and meso-diaminopimelic acid, an essential component of bacterial cell walls. This is Succinyl-diaminopimelate desuccinylase from Methylorubrum extorquens (strain PA1) (Methylobacterium extorquens).